A 419-amino-acid polypeptide reads, in one-letter code: Tyrosine--tRNA ligase (419 aa).

Position 34 (tyrosine 34) interacts with L-tyrosine. The 'HIGH' region motif lies at 39-48; sequence PTADSLHLGH. Residues tyrosine 169 and glutamine 173 each coordinate L-tyrosine. The 'KMSKS' region signature appears at 229-233; it reads KFGKS. Lysine 232 contributes to the ATP binding site. The 68-residue stretch at 352-419 folds into the S4 RNA-binding domain; it reads LNIIDLLVTS…KKKYFVLNFK (68 aa).

This sequence belongs to the class-I aminoacyl-tRNA synthetase family. TyrS type 1 subfamily. In terms of assembly, homodimer.

It is found in the cytoplasm. The catalysed reaction is tRNA(Tyr) + L-tyrosine + ATP = L-tyrosyl-tRNA(Tyr) + AMP + diphosphate + H(+). Its function is as follows. Catalyzes the attachment of tyrosine to tRNA(Tyr) in a two-step reaction: tyrosine is first activated by ATP to form Tyr-AMP and then transferred to the acceptor end of tRNA(Tyr). This is Tyrosine--tRNA ligase from Streptococcus agalactiae serotype V (strain ATCC BAA-611 / 2603 V/R).